A 220-amino-acid polypeptide reads, in one-letter code: Iron-sulfur cluster repair protein YtfE (220 aa).

The protein belongs to the RIC family. YtfE subfamily. Homodimer.

It localises to the cytoplasm. In terms of biological role, di-iron-containing protein involved in the repair of iron-sulfur clusters damaged by oxidative and nitrosative stress conditions. The sequence is that of Iron-sulfur cluster repair protein YtfE from Salmonella typhimurium (strain LT2 / SGSC1412 / ATCC 700720).